Consider the following 371-residue polypeptide: Putative glutamate--cysteine ligase 2 (371 aa).

This sequence belongs to the glutamate--cysteine ligase type 2 family. YbdK subfamily.

It catalyses the reaction L-cysteine + L-glutamate + ATP = gamma-L-glutamyl-L-cysteine + ADP + phosphate + H(+). Functionally, ATP-dependent carboxylate-amine ligase which exhibits weak glutamate--cysteine ligase activity. The polypeptide is Putative glutamate--cysteine ligase 2 (Burkholderia ambifaria (strain MC40-6)).